An 818-amino-acid chain; its full sequence is H(+)/Cl(-) exchange transporter 3 (818 aa).

Over 1-125 the chain is Cytoplasmic; it reads MESEQLFHRG…WEMTKSLYDA (125 aa). 3 short sequence motifs (di-leucine internalization motif; mediates targeting to late endosome and lysosome membranes) span residues 28–29, 46–47, and 71–75; these read LL and LLDLL. A helical transmembrane segment spans residues 126–163; it reads WSGWLVVTLTGLASGALAGLIDIAADWMTDLKEGICLS. The N-linked (GlcNAc...) asparagine glycan is linked to N177. Residues 209–232 traverse the membrane as a helical segment; the sequence is MNYIMYIFWALSFAFLAVSLVKVF. The Selectivity filter part_1 signature appears at 238-242; sequence GSGIP. S239 contributes to the chloride binding site. Residues 241–248 constitute an intramembrane region (helical); it reads IPEIKTIL. Helical transmembrane passes span 258–276 and 282–301; these read GKWTLMIKTITLVLAVASG and EGPLVHVACCCGNIFSYLFP. The short motif at 280-284 is the Selectivity filter part_2 element; that stretch reads GKEGP. Intramembrane regions (helical) lie at residues 313–325 and 329–337; these read VLSAASAAGVSVA and PIGGVLFSL. The next 3 membrane-spanning stretches (helical) occupy residues 349–367, 391–416, and 423–443; these read LWRSFFAALVAAFVLRSIN, FPFILLGVFGGLWGAFFIRANIAWCR, and FGKYPVLEVIIVAAITAVIAF. N-linked (GlcNAc...) asparagine glycosylation is found at N451 and N479. 2 helical membrane-spanning segments follow: residues 500 to 520 and 525 to 544; these read IWQLCLALIFKIIMTVFTFGI and GLFIPSMAIGAIAGRIVGIA. A Selectivity filter part_3 motif is present at residues 525–529; the sequence is GLFIP. A chloride-binding site is contributed by F527. 2 consecutive intramembrane regions (helical) follow at residues 572–586 and 590–601; these read GLYAMVGAAACLGGV and TVSLVVIVFELT. The segment at residues 602 to 605 is an intramembrane region (note=Loop between two helices); that stretch reads GGLE. A helical transmembrane segment spans residues 606–624; that stretch reads YIVPLMAAVMTSKWVGDAF. Residues 625 to 818 lie on the Cytoplasmic side of the membrane; it reads GREGIYEAHI…NQDPASIMFN (194 aa). Position 630 (Y630) interacts with chloride. CBS domains lie at 658–722 and 755–812; these read MRPR…ARKK and LDMS…NQDP. ATP-binding positions include 689–691 and 796–799; these read YNG and TKKD.

Belongs to the chloride channel (TC 2.A.49) family. ClC-3/CLCN3 subfamily. Monomer and homodimer. Forms heterodimers with CLCN4. In terms of processing, N-glycosylated. In terms of tissue distribution, abundant in brain, especially in the olfactory bulb, hippocampus, and cerebellum. A moderate expression is seen in the lung, kidney and adrenal gland.

The protein localises to the lysosome membrane. The protein resides in the late endosome membrane. Its subcellular location is the cell membrane. It is found in the early endosome membrane. Strongly outwardly rectifying, electrogenic H(+)/Cl(-)exchanger which mediates the exchange of chloride ions against protons. The CLC channel family contains both chloride channels and proton-coupled anion transporters that exchange chloride or another anion for protons. The presence of conserved gating glutamate residues is typical for family members that function as antiporters. In terms of biological role, strongly outwardly rectifying, electrogenic H(+)/Cl(-)exchanger which mediates the exchange of chloride ions against protons. May play an important role in neuronal cell function through regulation of membrane excitability by protein kinase C. It could help neuronal cells to establish short-term memory. The protein is H(+)/Cl(-) exchange transporter 3 (Clcn3) of Rattus norvegicus (Rat).